We begin with the raw amino-acid sequence, 628 residues long: Chaperone protein HtpG (628 aa).

An a; substrate-binding region spans residues 1-340 (MKGQETRGFQ…SNDLPLNVSR (340 aa)). A b region spans residues 341–556 (EILQDSRVTQ…ADDMTTQMAK (216 aa)). The c stretch occupies residues 557–628 (LFAAAGQAAP…IRRMNQLLNA (72 aa)).

The protein belongs to the heat shock protein 90 family. Homodimer.

It localises to the cytoplasm. Its function is as follows. Molecular chaperone. Has ATPase activity. The chain is Chaperone protein HtpG from Sodalis glossinidius (strain morsitans).